The following is a 476-amino-acid chain: MSPQTETKASVGFKAGVKDYKLTYYTPEYETKDTDILAAFRVTPQLGVPPEEAGAAVAAESSTGTWTTVWTDGLTSLDRYKGRCYHIEPVPGDPDQYICYVAYPLDLFEEGSVTNMFTSIVGNVFGFKALRALRLEDLRIPPAYVKTFQGPPHGIQVERDKLNKYGRPLLGCTIKPKLGLSAKNYGRACYECLRGGLDFTKDDENVNSQPFMRWRDRFVFCAEAIYKAQAETGEIKGHYLNATAGTCEEMIKRAVFAKELGVPIVMHDYLTGGFTANTTLSHYCRDNGLLLHIHRAMHAVIDRQKNHGMHFRVLAKALRMSGGDHIHSGTVVGKLEGEREITLGFVDLLRDDFIEKDRSRGIFFTQDWVSMPGVIPVASGGIHVWHMPALTEIFGDDSVLQFGGGTLGHPWGNAPGAAANRVALEACVQARNEGRDLAREGNEIIKAACKWSAELAAACEIWKEIKFDTFKAMDTL.

The propeptide occupies 1–2 (MS). Pro-3 carries the N-acetylproline modification. Position 14 is an N6,N6,N6-trimethyllysine (Lys-14). Substrate-binding residues include Asn-123 and Thr-173. Catalysis depends on Lys-175, which acts as the Proton acceptor. Lys-177 lines the substrate pocket. Residues Lys-201, Asp-203, and Glu-204 each contribute to the Mg(2+) site. Lys-201 carries the N6-carboxylysine modification. The active-site Proton acceptor is the His-294. 3 residues coordinate substrate: Arg-295, His-327, and Ser-379.

It belongs to the RuBisCO large chain family. Type I subfamily. As to quaternary structure, heterohexadecamer of 8 large chains and 8 small chains; disulfide-linked. The disulfide link is formed within the large subunit homodimers. Requires Mg(2+) as cofactor. Post-translationally, the disulfide bond which can form in the large chain dimeric partners within the hexadecamer appears to be associated with oxidative stress and protein turnover.

It is found in the plastid. Its subcellular location is the chloroplast. The catalysed reaction is 2 (2R)-3-phosphoglycerate + 2 H(+) = D-ribulose 1,5-bisphosphate + CO2 + H2O. It catalyses the reaction D-ribulose 1,5-bisphosphate + O2 = 2-phosphoglycolate + (2R)-3-phosphoglycerate + 2 H(+). In terms of biological role, ruBisCO catalyzes two reactions: the carboxylation of D-ribulose 1,5-bisphosphate, the primary event in carbon dioxide fixation, as well as the oxidative fragmentation of the pentose substrate in the photorespiration process. Both reactions occur simultaneously and in competition at the same active site. The sequence is that of Ribulose bisphosphate carboxylase large chain from Sorghum bicolor (Sorghum).